The chain runs to 469 residues: Tetratricopeptide repeat protein 38 (469 aa).

Ala-2 is modified (N-acetylalanine). Ser-5 carries the post-translational modification Phosphoserine. TPR repeat units follow at residues 108–141 (REQL…HPTD), 180–213 (SYVK…NPTD), and 252–285 (CHNY…SLQA).

This sequence belongs to the TTC38 family.

This chain is Tetratricopeptide repeat protein 38 (TTC38), found in Homo sapiens (Human).